A 639-amino-acid chain; its full sequence is Bone morphogenetic protein 1 homolog (639 aa).

The signal sequence occupies residues 1 to 23 (MDLLYYMTVSLLGFILSLTTFIG). A propeptide spanning residues 24-109 (ETTRALSDDV…RAVTARPERR (86 aa)) is cleaved from the precursor. The Peptidase M12A domain occupies 100-305 (RAVTARPERR…IQANLLYKCP (206 aa)). N122 and N140 each carry an N-linked (GlcNAc...) asparagine glycan. Cystine bridges form between C143–C304, C167–C189, C169–C170, C307–C333, C360–C382, and C420–C446. H197 lines the Zn(2+) pocket. The active site involves E198. Zn(2+)-binding residues include H201 and H207. CUB domains are found at residues 307–419 (CGRT…YEAI) and 420–531 (CGGH…DFFK). Residue N317 is glycosylated (N-linked (GlcNAc...) asparagine). N455 carries an N-linked (GlcNAc...) asparagine glycan. 4 disulfide bridges follow: C473–C495, C536–C548, C544–C557, and C559–C572. The EGF-like; calcium-binding domain occupies 532-573 (EKDECAQPDQGGCMDVCVNTIGSYRCDCRPGYELSSDGRRCE).

It depends on Zn(2+) as a cofactor. In terms of tissue distribution, ectodermal and primary mesenchyme cells in hatched blastula.

The protein is Bone morphogenetic protein 1 homolog of Strongylocentrotus purpuratus (Purple sea urchin).